We begin with the raw amino-acid sequence, 369 residues long: MNRPYNFSAGPAAIPAEVLQQAAAEMLDWHGSGMSVMEMSHRGKEFISIYEQAEADLRELLAVPPEFKILFMQGGGLAENAIVPLNLSRAGTVDFVLSGSWSQKSAKEARKYVADAHIAASGEDGKFTALPAPESWQLSRGASYVHICSNETIHGVEFQELPDLKALGCDAPLVVDFSSHVASRPVDWSRVGLAFGGAQKNLGPAGLTLVIVREDLLGHALPACPSAFDYKTVADNQSMYNTPPTWGIYIAGLTFQWIKRQTEGGLTGVAALEARNIAKADLFYQYVDQSSFYVNKVAANCRSRMNIPFFLRDESRNDAFLAGARERGLLQLKGHKSVGGMRASIYNAMPIAGVQALVEYMREFEQRNA.

Residue Arg-42 participates in L-glutamate binding. Pyridoxal 5'-phosphate-binding residues include Trp-101, Thr-152, Asp-176, and Gln-199. An N6-(pyridoxal phosphate)lysine modification is found at Lys-200. 241–242 (NT) is a pyridoxal 5'-phosphate binding site.

This sequence belongs to the class-V pyridoxal-phosphate-dependent aminotransferase family. SerC subfamily. Homodimer. It depends on pyridoxal 5'-phosphate as a cofactor.

The protein localises to the cytoplasm. It carries out the reaction O-phospho-L-serine + 2-oxoglutarate = 3-phosphooxypyruvate + L-glutamate. The catalysed reaction is 4-(phosphooxy)-L-threonine + 2-oxoglutarate = (R)-3-hydroxy-2-oxo-4-phosphooxybutanoate + L-glutamate. The protein operates within amino-acid biosynthesis; L-serine biosynthesis; L-serine from 3-phospho-D-glycerate: step 2/3. It functions in the pathway cofactor biosynthesis; pyridoxine 5'-phosphate biosynthesis; pyridoxine 5'-phosphate from D-erythrose 4-phosphate: step 3/5. Its function is as follows. Catalyzes the reversible conversion of 3-phosphohydroxypyruvate to phosphoserine and of 3-hydroxy-2-oxo-4-phosphonooxybutanoate to phosphohydroxythreonine. This chain is Phosphoserine aminotransferase, found in Delftia acidovorans (strain DSM 14801 / SPH-1).